A 125-amino-acid chain; its full sequence is MQRIILIIIGWLAVVLGTLGVVLPVLPTTPFILLAAWCFARSSPRFHAWLLYRSWFGSYLRFWQKHHAMPRGVKPRAILLILLTFAISLWFVQMPWVRIMLLVILACLLFYMWRIPVIDEKQEKH.

Topologically, residues 1–6 (MQRIIL) are cytoplasmic. The helical transmembrane segment at 7-26 (IIIGWLAVVLGTLGVVLPVL) threads the bilayer. The Periplasmic portion of the chain corresponds to 27-45 (PTTPFILLAAWCFARSSPR). The chain crosses the membrane as a helical span at residues 46-63 (FHAWLLYRSWFGSYLRFW). Residues 64–74 (QKHHAMPRGVK) lie on the Cytoplasmic side of the membrane. A helical transmembrane segment spans residues 75–92 (PRAILLILLTFAISLWFV). Topologically, residues 93–95 (QMP) are periplasmic. Residues 96–118 (WVRIMLLVILACLLFYMWRIPVI) traverse the membrane as a helical segment. Residues 119–125 (DEKQEKH) lie on the Cytoplasmic side of the membrane.

It is found in the cell inner membrane. In Escherichia coli O157:H7, this protein is Inner membrane protein YbaN (ybaN).